A 115-amino-acid chain; its full sequence is Glutaredoxin 4 (115 aa).

In terms of domain architecture, Glutaredoxin spans 5–107 (IEKIQRQIAE…QLIKETAAKY (103 aa)). Lys22 contributes to the glutathione binding site. Residue Cys30 coordinates [2Fe-2S] cluster. Residues Arg59, Phe71, and 84–85 (CD) contribute to the glutathione site.

The protein belongs to the glutaredoxin family. Monothiol subfamily. Homodimer.

It is found in the cytoplasm. Monothiol glutaredoxin involved in the biogenesis of iron-sulfur clusters. The protein is Glutaredoxin 4 (grxD) of Shigella flexneri.